We begin with the raw amino-acid sequence, 274 residues long: Bis(5'-nucleosyl)-tetraphosphatase, symmetrical (274 aa).

This sequence belongs to the Ap4A hydrolase family.

It catalyses the reaction P(1),P(4)-bis(5'-adenosyl) tetraphosphate + H2O = 2 ADP + 2 H(+). Functionally, hydrolyzes diadenosine 5',5'''-P1,P4-tetraphosphate to yield ADP. The sequence is that of Bis(5'-nucleosyl)-tetraphosphatase, symmetrical from Shewanella sediminis (strain HAW-EB3).